A 132-amino-acid chain; its full sequence is MGRDTIADIITSIRNADMDKKGRVRIGYTNIAENIIKILLREGFIENVRKHRESNKYFLVSTLRHRRNRKRPYKTILKRISRPGLRIYSNYQRIPRILGGIGIVILSTSRGIMTDREARLEGIGGEILCYIW.

Belongs to the universal ribosomal protein uS8 family. As to quaternary structure, part of the 30S ribosomal subunit.

Its subcellular location is the plastid. The protein localises to the chloroplast. Functionally, one of the primary rRNA binding proteins, it binds directly to 16S rRNA central domain where it helps coordinate assembly of the platform of the 30S subunit. The polypeptide is Small ribosomal subunit protein uS8c (rps8) (Platanus occidentalis (Sycamore)).